A 180-amino-acid chain; its full sequence is Fucolectin-3 (180 aa).

An N-terminal signal peptide occupies residues 1–22 (MEVKMIILLFQILAISTLKSDS). Residues 31–179 (QENVALRGRA…VEVNVLFPAP (149 aa)) are F5/8 type C-like. Ca(2+) contacts are provided by asparagine 58, aspartate 61, asparagine 63, and serine 72. 3 disulfide bridges follow: cysteine 73–cysteine 168, cysteine 104–cysteine 105, and cysteine 130–cysteine 146. Alpha-L-fucose-binding residues include histidine 75 and arginine 101. Positions 101–103 (RGD) match the Cell attachment site motif. Arginine 108 is an alpha-L-fucose binding site. Ca(2+)-binding residues include cysteine 168 and glutamate 169.

Belongs to the fucolectin family. Homotrimer. As to expression, parenchymal hepatocytes.

The protein localises to the secreted. It is found in the extracellular space. Acts as a defensive agent. Recognizes blood group fucosylated oligosaccharides including A, B, H and Lewis B-type antigens. Does not recognize Lewis A antigen and has low affinity for monovalent haptens. The protein is Fucolectin-3 of Anguilla japonica (Japanese eel).